We begin with the raw amino-acid sequence, 112 residues long: Ig kappa chain V-III region TEPC 124 (112 aa).

The framework-1 stretch occupies residues 1–23 (DIVLTQSPASLAVSLGQRATISC). A disulfide bond links Cys23 and Cys92. The tract at residues 24 to 38 (RASZSVNWYGNSFMZ) is complementarity-determining-1. Residues 39–53 (WYZZKPGZPPKLLIY) form a framework-2 region. Residues 54–60 (RASNLZS) form a complementarity-determining-2 region. The tract at residues 61 to 92 (GIPARFSGSGSRTBFTLTIBPVZABDVATYFC) is framework-3. The complementarity-determining-3 stretch occupies residues 93 to 101 (ZZSBZAPWT). Residues 102-111 (FGSGTKLEIK) form a framework-4 region.

This is Ig kappa chain V-III region TEPC 124 from Mus musculus (Mouse).